Reading from the N-terminus, the 248-residue chain is MEWTDDGIVLGLRRHGESSAVVELLTREHGRHLGLVRGAAGKRMRPVLQPGNTVRAIWRARLDEHLGMYAVDGLTLRAAELMSASHGAYGVTHLASLARLLPERDPHEDMYFRLEHALDDFADAGAAAAHIVRFELAILTELGFGLDLESCAATGETSDLIYVSPKSGGAVSRTAGAPWADRLLPLPPFLRESDEDHGWSDQDLLDGFRLTGLFLLRHVLEPRGQGHSDAREGFINAVTRARTRLTRA.

It belongs to the RecO family.

Functionally, involved in DNA repair and RecF pathway recombination. This Bradyrhizobium sp. (strain ORS 278) protein is DNA repair protein RecO.